Consider the following 711-residue polypeptide: Polyribonucleotide nucleotidyltransferase (711 aa).

The Mg(2+) site is built by Asp-486 and Asp-492. The region spanning 553-612 is the KH domain; the sequence is PRIHTIKISTDKIKDVIGKGGSVIRALTEETGTTIEIEDDGTVKIAATDGEKAKYAIRRI. Residues 622–690 form the S1 motif domain; it reads GRIYNGKVTR…RQGRVRLSIK (69 aa). The tract at residues 690–711 is disordered; that stretch reads KEATEQSQPAAAPEAPASEQAE. Residues 694 to 711 show a composition bias toward low complexity; that stretch reads EQSQPAAAPEAPASEQAE.

It belongs to the polyribonucleotide nucleotidyltransferase family. Component of the RNA degradosome, which is a multiprotein complex involved in RNA processing and mRNA degradation. Mg(2+) is required as a cofactor.

It localises to the cytoplasm. The enzyme catalyses RNA(n+1) + phosphate = RNA(n) + a ribonucleoside 5'-diphosphate. In terms of biological role, involved in mRNA degradation. Catalyzes the phosphorolysis of single-stranded polyribonucleotides processively in the 3'- to 5'-direction. In Salmonella choleraesuis (strain SC-B67), this protein is Polyribonucleotide nucleotidyltransferase.